The sequence spans 132 residues: NADH-quinone oxidoreductase subunit A 2 (132 aa).

3 consecutive transmembrane segments (helical) span residues A9–L29, L66–V86, and W93–L113.

This sequence belongs to the complex I subunit 3 family. In terms of assembly, NDH-1 is composed of 13 different subunits. Subunits NuoA, H, J, K, L, M, N constitute the membrane sector of the complex.

Its subcellular location is the cell inner membrane. The catalysed reaction is a quinone + NADH + 5 H(+)(in) = a quinol + NAD(+) + 4 H(+)(out). In terms of biological role, NDH-1 shuttles electrons from NADH, via FMN and iron-sulfur (Fe-S) centers, to quinones in the respiratory chain. The immediate electron acceptor for the enzyme in this species is believed to be ubiquinone. Couples the redox reaction to proton translocation (for every two electrons transferred, four hydrogen ions are translocated across the cytoplasmic membrane), and thus conserves the redox energy in a proton gradient. This is NADH-quinone oxidoreductase subunit A 2 from Pseudomonas paraeruginosa (strain DSM 24068 / PA7) (Pseudomonas aeruginosa (strain PA7)).